The chain runs to 513 residues: Light-independent protochlorophyllide reductase subunit B (513 aa).

Residue aspartate 36 participates in [4Fe-4S] cluster binding. Aspartate 299 serves as the catalytic Proton donor. 434-435 serves as a coordination point for substrate; it reads GM.

This sequence belongs to the ChlB/BchB/BchZ family. As to quaternary structure, protochlorophyllide reductase is composed of three subunits; ChlL, ChlN and ChlB. Forms a heterotetramer of two ChlB and two ChlN subunits. It depends on [4Fe-4S] cluster as a cofactor.

Its subcellular location is the plastid. The protein localises to the chloroplast. It carries out the reaction chlorophyllide a + oxidized 2[4Fe-4S]-[ferredoxin] + 2 ADP + 2 phosphate = protochlorophyllide a + reduced 2[4Fe-4S]-[ferredoxin] + 2 ATP + 2 H2O. The protein operates within porphyrin-containing compound metabolism; chlorophyll biosynthesis (light-independent). In terms of biological role, component of the dark-operative protochlorophyllide reductase (DPOR) that uses Mg-ATP and reduced ferredoxin to reduce ring D of protochlorophyllide (Pchlide) to form chlorophyllide a (Chlide). This reaction is light-independent. The NB-protein (ChlN-ChlB) is the catalytic component of the complex. This is Light-independent protochlorophyllide reductase subunit B from Marchantia polymorpha (Common liverwort).